A 711-amino-acid polypeptide reads, in one-letter code: Polyribonucleotide nucleotidyltransferase (711 aa).

2 residues coordinate Mg(2+): Asp-486 and Asp-492. The 60-residue stretch at 553–612 folds into the KH domain; it reads PRIHTIKINPDKIKDVIGKGGSVIRALTEETGTTIEIEDDGTVKIAATDGEKAKHAIRRI. The S1 motif domain maps to 622-690; it reads GRVYNGKVTR…RQGRIRLSIK (69 aa). The segment at 690–711 is disordered; the sequence is KEATEQSQPAAALEAPAAEQGE. Residues 698–711 are compositionally biased toward low complexity; sequence PAAALEAPAAEQGE.

This sequence belongs to the polyribonucleotide nucleotidyltransferase family. As to quaternary structure, component of the RNA degradosome, which is a multiprotein complex involved in RNA processing and mRNA degradation. Mg(2+) serves as cofactor.

The protein localises to the cytoplasm. It catalyses the reaction RNA(n+1) + phosphate = RNA(n) + a ribonucleoside 5'-diphosphate. Involved in mRNA degradation. Catalyzes the phosphorolysis of single-stranded polyribonucleotides processively in the 3'- to 5'-direction. The protein is Polyribonucleotide nucleotidyltransferase of Escherichia coli O127:H6 (strain E2348/69 / EPEC).